A 62-amino-acid polypeptide reads, in one-letter code: Large ribosomal subunit protein bL28 (62 aa).

Belongs to the bacterial ribosomal protein bL28 family.

The sequence is that of Large ribosomal subunit protein bL28 from Streptococcus gordonii (strain Challis / ATCC 35105 / BCRC 15272 / CH1 / DL1 / V288).